A 512-amino-acid chain; its full sequence is Photosystem II CP47 reaction center protein (512 aa).

6 consecutive transmembrane segments (helical) span residues 21-36, 101-115, 140-156, 203-218, 237-252, and 457-472; these read AVHL…WAGS, IVLS…IWHW, GIHL…FGAF, IAAG…FHLS, VLSS…AFVV, and TFAL…HGAR.

Belongs to the PsbB/PsbC family. PsbB subfamily. As to quaternary structure, PSII is composed of 1 copy each of membrane proteins PsbA, PsbB, PsbC, PsbD, PsbE, PsbF, PsbH, PsbI, PsbJ, PsbK, PsbL, PsbM, PsbT, PsbX, PsbY, PsbZ, Psb30/Ycf12, at least 3 peripheral proteins of the oxygen-evolving complex and a large number of cofactors. It forms dimeric complexes. It depends on Binds multiple chlorophylls. PSII binds additional chlorophylls, carotenoids and specific lipids. as a cofactor.

The protein localises to the plastid. The protein resides in the chloroplast thylakoid membrane. In terms of biological role, one of the components of the core complex of photosystem II (PSII). It binds chlorophyll and helps catalyze the primary light-induced photochemical processes of PSII. PSII is a light-driven water:plastoquinone oxidoreductase, using light energy to abstract electrons from H(2)O, generating O(2) and a proton gradient subsequently used for ATP formation. This is Photosystem II CP47 reaction center protein from Physcomitrium patens (Spreading-leaved earth moss).